Reading from the N-terminus, the 520-residue chain is MDGVVVTYTKIAAAVAVAVVVVGWAWKVLNWVWVSPRKLEESLRKQGFRGNSYRLFYGDLKESSEMTRKAKLKPINLSDDPVLRVRPFIHQTVKKYGKSSFIWIGPTPRVQIMDPEIIKEIMVKSYKFNKPKRNPLVKLFADGLANHEGELWAKHRKLLNPAFHLERLKCMLPAMYFSCIEMVSKWDKMISKDGSRELDVWPFLQRLTSDVISHTAFGSSYEEGNIVFELQTEQAELVMKTLQSVYIPGWSYLPTKRNRKMKEIDRKTQSCLMNIINKKTKAMQAGEGSTDDILGILLESNLKEQLGQGKKNVGMSIQEVMGECKQFYFAGQETTSGLLVWTMVLLSIHPNWQARAREEVLQQFGNAKPDFDNLNHLKIVTMILYEVLRLYPPVDTLFRRVDQETTLGDITLPAGVQISLPIMILHHDQNIWGDDAKEFNPERFSEGVSKATKNQVVFFPFGWGPRICIGQNFALLEAKLALAIILQRFSFELSPSYTHAPTTVLTVQPQHGANLILHKL.

The chain crosses the membrane as a helical span at residues 14-34 (AVAVAVVVVGWAWKVLNWVWV). Cysteine 468 provides a ligand contact to heme.

The protein belongs to the cytochrome P450 family. The cofactor is heme.

It is found in the membrane. The enzyme catalyses oleanolate + reduced [NADPH--hemoprotein reductase] + O2 = hederagenin + oxidized [NADPH--hemoprotein reductase] + H2O + H(+). Functionally, catalyzes the oxidation of oleanolate at the C-23 position to form hederagenin. This is Cytochrome P450 72A397 from Kalopanax septemlobus (Castor aralia).